The sequence spans 235 residues: Phosphoribosylaminoimidazole-succinocarboxamide synthase (235 aa).

This sequence belongs to the SAICAR synthetase family.

It catalyses the reaction 5-amino-1-(5-phospho-D-ribosyl)imidazole-4-carboxylate + L-aspartate + ATP = (2S)-2-[5-amino-1-(5-phospho-beta-D-ribosyl)imidazole-4-carboxamido]succinate + ADP + phosphate + 2 H(+). It functions in the pathway purine metabolism; IMP biosynthesis via de novo pathway; 5-amino-1-(5-phospho-D-ribosyl)imidazole-4-carboxamide from 5-amino-1-(5-phospho-D-ribosyl)imidazole-4-carboxylate: step 1/2. The polypeptide is Phosphoribosylaminoimidazole-succinocarboxamide synthase (Chlorobaculum tepidum (strain ATCC 49652 / DSM 12025 / NBRC 103806 / TLS) (Chlorobium tepidum)).